The primary structure comprises 987 residues: Kinesin-like protein KIN-14G (987 aa).

Positions 44–163 (SLRRYEAAGW…CILALKSYSE (120 aa)) constitute a Calponin-homology (CH) domain. The segment at 201–221 (ISRTQSTDMLSTDQPLSSDGD) is disordered. Positions 394-721 (NIRVYCRVRP…LKFAERVGSV (328 aa)) constitute a Kinesin motor domain. Residue 478–485 (GQTGSGKT) participates in ATP binding. A coiled-coil region spans residues 725–754 (AARVNKDNSEVKELKEQIANLKMALVRKGN). Disordered stretches follow at residues 759-849 (QPTA…ESKS) and 927-987 (NIQN…SLGT). Residues 788-797 (MGNTSNNSRP) are compositionally biased toward polar residues. The segment covering 840 to 849 (GKDEDRESKS) has biased composition (basic and acidic residues). The segment covering 964-974 (PPNTVNSQPQR) has biased composition (polar residues).

Belongs to the TRAFAC class myosin-kinesin ATPase superfamily. Kinesin family. KIN-14 subfamily. As to quaternary structure, monomer. Flower specific.

The protein resides in the cytoplasm. It is found in the cytoskeleton. Functionally, microtubule-binding motor protein. This chain is Kinesin-like protein KIN-14G, found in Arabidopsis thaliana (Mouse-ear cress).